The following is a 371-amino-acid chain: Peptide chain release factor 2 (371 aa).

Glutamine 250 is modified (N5-methylglutamine).

It belongs to the prokaryotic/mitochondrial release factor family. In terms of processing, methylated by PrmC. Methylation increases the termination efficiency of RF2.

The protein resides in the cytoplasm. Peptide chain release factor 2 directs the termination of translation in response to the peptide chain termination codons UGA and UAA. The polypeptide is Peptide chain release factor 2 (Paramagnetospirillum magneticum (strain ATCC 700264 / AMB-1) (Magnetospirillum magneticum)).